The sequence spans 441 residues: ATP-dependent protease ATPase subunit HslU (441 aa).

Residues I18, 60-65, D254, E319, and R391 each bind ATP; that span reads GVGKTE.

This sequence belongs to the ClpX chaperone family. HslU subfamily. In terms of assembly, a double ring-shaped homohexamer of HslV is capped on each side by a ring-shaped HslU homohexamer. The assembly of the HslU/HslV complex is dependent on binding of ATP.

The protein resides in the cytoplasm. In terms of biological role, ATPase subunit of a proteasome-like degradation complex; this subunit has chaperone activity. The binding of ATP and its subsequent hydrolysis by HslU are essential for unfolding of protein substrates subsequently hydrolyzed by HslV. HslU recognizes the N-terminal part of its protein substrates and unfolds these before they are guided to HslV for hydrolysis. In Shewanella loihica (strain ATCC BAA-1088 / PV-4), this protein is ATP-dependent protease ATPase subunit HslU.